The following is a 392-amino-acid chain: Stilbene synthase 3 (392 aa).

Substrate is bound at residue 55–58; the sequence is KFNR. Residue Cys164 is part of the active site. Substrate contacts are provided by residues Leu267 and 305–307; that span reads GGP.

This sequence belongs to the thiolase-like superfamily. Chalcone/stilbene synthases family. As to quaternary structure, homodimer.

Its subcellular location is the cytoplasm. The catalysed reaction is 4-coumaroyl-CoA + 3 malonyl-CoA + 3 H(+) = trans-resveratrol + 4 CO2 + 4 CoA. Its pathway is phytoalexin biosynthesis; 3,4',5-trihydroxystilbene biosynthesis; 3,4',5-trihydroxystilbene from trans-4-coumarate: step 2/2. Mediates resistance to pathogens which are sensitive to stilbenes. The sequence is that of Stilbene synthase 3 from Vitis vinifera (Grape).